The following is a 711-amino-acid chain: Polyribonucleotide nucleotidyltransferase (711 aa).

Mg(2+)-binding residues include D486 and D492. The KH domain maps to 553–612 (PRIHTIKINPDKIKDVIGKGGSVIRALTEETGTTIEIEDDGTVKIAATDGDKAQHAIRRI). Residues 622–690 (GRIYNGKVTR…RQGRVRLSIK (69 aa)) enclose the S1 motif domain. Residues 689 to 711 (IKEATEQTPSAAAPEAPAAEQGE) form a disordered region. The segment covering 694-711 (EQTPSAAAPEAPAAEQGE) has biased composition (low complexity).

Belongs to the polyribonucleotide nucleotidyltransferase family. As to quaternary structure, component of the RNA degradosome, which is a multiprotein complex involved in RNA processing and mRNA degradation. The cofactor is Mg(2+).

The protein resides in the cytoplasm. It carries out the reaction RNA(n+1) + phosphate = RNA(n) + a ribonucleoside 5'-diphosphate. Involved in mRNA degradation. Catalyzes the phosphorolysis of single-stranded polyribonucleotides processively in the 3'- to 5'-direction. The polypeptide is Polyribonucleotide nucleotidyltransferase (Klebsiella pneumoniae subsp. pneumoniae (strain ATCC 700721 / MGH 78578)).